The following is a 193-amino-acid chain: Ribonuclease HII (193 aa).

The 179-residue stretch at 15–193 folds into the RNase H type-2 domain; it reads YIVAGVDEAG…SYHRRSFKSC (179 aa). 3 residues coordinate a divalent metal cation: Asp21, Glu22, and Asp112.

Belongs to the RNase HII family. Mn(2+) is required as a cofactor. Requires Mg(2+) as cofactor.

The protein localises to the cytoplasm. It carries out the reaction Endonucleolytic cleavage to 5'-phosphomonoester.. Functionally, endonuclease that specifically degrades the RNA of RNA-DNA hybrids. The chain is Ribonuclease HII (rnhB) from Rickettsia prowazekii (strain Madrid E).